We begin with the raw amino-acid sequence, 384 residues long: 8-amino-7-oxononanoate synthase (384 aa).

A substrate-binding site is contributed by Arg-21. 108–109 (GF) is a pyridoxal 5'-phosphate binding site. Substrate is bound at residue His-133. Residues Ser-179, His-207, and Thr-233 each coordinate pyridoxal 5'-phosphate. N6-(pyridoxal phosphate)lysine is present on Lys-236. Thr-352 is a binding site for substrate.

The protein belongs to the class-II pyridoxal-phosphate-dependent aminotransferase family. BioF subfamily. In terms of assembly, homodimer. The cofactor is pyridoxal 5'-phosphate.

The enzyme catalyses 6-carboxyhexanoyl-[ACP] + L-alanine + H(+) = (8S)-8-amino-7-oxononanoate + holo-[ACP] + CO2. The protein operates within cofactor biosynthesis; biotin biosynthesis. Its function is as follows. Catalyzes the decarboxylative condensation of pimeloyl-[acyl-carrier protein] and L-alanine to produce 8-amino-7-oxononanoate (AON), [acyl-carrier protein], and carbon dioxide. This Escherichia coli O9:H4 (strain HS) protein is 8-amino-7-oxononanoate synthase.